The sequence spans 130 residues: Cytochrome c-type biogenesis protein CcmE (130 aa).

At 1-7 (MKKKHKR) the chain is on the cytoplasmic side. Residues 8–28 (LLITSGIFCFLSCAVFFILTT) form a helical; Signal-anchor for type II membrane protein membrane-spanning segment. The Extracellular portion of the chain corresponds to 29–130 (LKENISFFYT…DENYMPKVLK (102 aa)). Heme contacts are provided by His120 and Tyr124.

Belongs to the CcmE/CycJ family.

The protein resides in the cell membrane. Its function is as follows. Heme chaperone required for the biogenesis of c-type cytochromes. Transiently binds heme delivered by CcmC and transfers the heme to apo-cytochromes in a process facilitated by CcmF and CcmH. The polypeptide is Cytochrome c-type biogenesis protein CcmE (Wolbachia pipientis wMel).